Reading from the N-terminus, the 83-residue chain is U25-theraphotoxin-Cg1b (83 aa).

The N-terminal stretch at 1–23 (MRFHTLLFLSFLLLVSCALICTA) is a signal peptide. A propeptide spanning residues 24–48 (QHPGLEKSGMFHENVGKGQHIEEKR) is cleaved from the precursor. 3 disulfide bridges follow: Cys-50–Cys-66, Cys-57–Cys-71, and Cys-65–Cys-79.

It belongs to the neurotoxin 07 (Beta/delta-agtx) family. 03 (aga-4) subfamily. JZTX sub-subfamily. Expressed by the venom gland.

Its subcellular location is the secreted. In terms of biological role, probable ion channel inhibitor. The sequence is that of U25-theraphotoxin-Cg1b from Chilobrachys guangxiensis (Chinese earth tiger tarantula).